We begin with the raw amino-acid sequence, 87 residues long: UPF0367 protein SynRCC307_0258 (87 aa).

It belongs to the UPF0367 family.

The chain is UPF0367 protein SynRCC307_0258 from Synechococcus sp. (strain RCC307).